Reading from the N-terminus, the 814-residue chain is Syn-copalyl diphosphate synthase TPS3, chloroplastic (814 aa).

A chloroplast-targeting transit peptide spans methionine 1–arginine 52. Residue lysine 248 participates in substrate binding. Mg(2+)-binding residues include aspartate 386 and aspartate 388. The DXDD motif signature appears at aspartate 386 to aspartate 389. Lysine 472 lines the substrate pocket.

It belongs to the terpene synthase family. Mg(2+) serves as cofactor. As to expression, mostly expressed in trichomes of leaves and fruits.

It localises to the plastid. The protein localises to the chloroplast. It catalyses the reaction (2E,6E,10E)-geranylgeranyl diphosphate = 9alpha-copalyl diphosphate. It participates in secondary metabolite biosynthesis; terpenoid biosynthesis. Involved in the biosynthesis of labdane-type diterpenoid including cleroda-dienols, and peregrinol lactones and furan derivatives, dopaminergic diterpenoids that can bind to dopamine receptors in the human pituitary gland, have probably ability to lower prolactin levels, and are used to treat menstrual cycle disorders (e.g. premenstrual syndrome and mastodynia). Terpene synthase that produces syn-copalyl diphosophate from geranylgeranyl diphosphate (GGPP). The protein is Syn-copalyl diphosphate synthase TPS3, chloroplastic of Vitex agnus-castus (Chaste tree).